We begin with the raw amino-acid sequence, 256 residues long: Nuclear shuttle protein (256 aa).

Residues 21-42 carry the Bipartite nuclear localization signal motif; sequence YQGFRRTAIVTRHDGKRRQHQS. The Nuclear localization signal signature appears at 81–96; that stretch reads QLGKIEPNRCRSYIKL. Residues 150-187 form an interaction with Arabidopsis thaliana NSI protein region; it reads ELFGARINSHGNLAVMPSLKDRFYIRHLLKRVLSVDKD.

The protein belongs to the begomovirus nuclear shuttle protein family. As to quaternary structure, binds to single-stranded and double-stranded viral DNA. Interacts with the host nuclear shuttle interacting (NSI) protein. This interaction may allow NSP to recruit NSI monomers to the viral genome and thus regulate nuclear export of viral genome by NSP.

It localises to the host nucleus. The protein resides in the host cytoplasm. Its subcellular location is the host cell membrane. Functionally, binds to the genomic viral ssDNA, shuttles it into and out of the cell nucleus. Begomoviruses use 2 proteins to transport their DNA from cell to cell. The nuclear shuttle protein (NSP) shuttles it between nucleus and cytoplasm and the movement protein (MP) probably transports the DNA-NSP complex to the cell periphery and facilitates movement across the cell wall. This Macroptilium lathyroides (Lima bean) protein is Nuclear shuttle protein.